The primary structure comprises 290 residues: MMADTLEIVLITGMSGSGKSVALHALEDAGYYCVDNLPPELLAAFVALEHQHHGNRVAIAMDVRSATALPLVPQQLRRLRGEGVTVHSLFLDATTDTLVRRFSETRRRHPLSRDEWYGEPHALLETLELERELLADLREQSHVIDTSAIRAAQLQGYVKSLMPALPGQLTLVFQSFAFKRGVPVDADYVFDVRMLPNPHYEPGLRNLTGKDQPVVHYLEQAREVRQMREHITHFLGHWLEPLAQNHRSYVTVAIGCTGGQHRSVYLVEQLAAEFSDRWTTLRRHRELDGR.

13 to 20 is an ATP binding site; that stretch reads GMSGSGKS. GTP is bound at residue 62–65; sequence DVRS.

It belongs to the RapZ-like family.

Its function is as follows. Displays ATPase and GTPase activities. The polypeptide is Nucleotide-binding protein Aave_3603 (Paracidovorax citrulli (strain AAC00-1) (Acidovorax citrulli)).